The following is a 70-amino-acid chain: uncharacterized protein (70 aa).

The first 16 residues, 1–16 (MKLLLVLITLIIAALA), serve as a signal peptide directing secretion.

This is an uncharacterized protein from Orgyia pseudotsugata (Douglas-fir tussock moth).